A 422-amino-acid polypeptide reads, in one-letter code: WD repeat and SOCS box-containing protein 1 (422 aa).

WD repeat units follow at residues 124 to 165, 168 to 208, 212 to 251, 254 to 293, and 309 to 346; these read SRCV…LLLN, DHTE…NMMK, GHQN…MIRK, GHYN…ILFE, and DNGR…SYPV. The 49-residue stretch at 374-422 folds into the SOCS box domain; it reads NAYFWSTPKYVSSLQHLCRMAIRRVMNTNEVKKLPIPQKIMEFLTYQTM.

In terms of assembly, component of a probable ECS E3 ubiquitin-protein ligase complex that contains the Elongin BC complex.

Its pathway is protein modification; protein ubiquitination. Functionally, probable substrate-recognition component of a SCF-like ECS (Elongin-Cullin-SOCS-box protein) E3 ubiquitin-protein ligase complex which mediates the ubiquitination and subsequent proteasomal degradation of target proteins. The protein is WD repeat and SOCS box-containing protein 1 (wsb1) of Xenopus tropicalis (Western clawed frog).